A 458-amino-acid chain; its full sequence is UDP-N-acetylmuramoylalanine--D-glutamate ligase (458 aa).

124-130 (GSDGKTT) lines the ATP pocket.

The protein belongs to the MurCDEF family.

It localises to the cytoplasm. It carries out the reaction UDP-N-acetyl-alpha-D-muramoyl-L-alanine + D-glutamate + ATP = UDP-N-acetyl-alpha-D-muramoyl-L-alanyl-D-glutamate + ADP + phosphate + H(+). The protein operates within cell wall biogenesis; peptidoglycan biosynthesis. Functionally, cell wall formation. Catalyzes the addition of glutamate to the nucleotide precursor UDP-N-acetylmuramoyl-L-alanine (UMA). The sequence is that of UDP-N-acetylmuramoylalanine--D-glutamate ligase from Clostridium botulinum (strain ATCC 19397 / Type A).